The primary structure comprises 453 residues: Acyl-coenzyme A thioesterase 2, mitochondrial (453 aa).

A mitochondrion-targeting transit peptide spans 1–42 (MVASSFAVLRASRLCQQDWKSWARLFVPPPLSTGGRTTWART). Residue lysine 83 is modified to N6-acetyllysine. Residues serine 273, aspartate 365, and histidine 399 each act as charge relay system in the active site. N6-succinyllysine is present on lysine 447.

It belongs to the C/M/P thioester hydrolase family. As to quaternary structure, monomer. Highly expressed in brown and white adipose tissue, muscle, heart, kidney, lung, adrenal gland and spleen; weakly expressed in intestine, testis and brain.

The protein localises to the mitochondrion matrix. The catalysed reaction is hexadecanoyl-CoA + H2O = hexadecanoate + CoA + H(+). The enzyme catalyses tetradecanoyl-CoA + H2O = tetradecanoate + CoA + H(+). It carries out the reaction octadecanoyl-CoA + H2O = octadecanoate + CoA + H(+). It catalyses the reaction eicosanoyl-CoA + H2O = eicosanoate + CoA + H(+). The catalysed reaction is decanoyl-CoA + H2O = decanoate + CoA + H(+). The enzyme catalyses dodecanoyl-CoA + H2O = dodecanoate + CoA + H(+). It carries out the reaction (9Z)-octadecenoyl-CoA + H2O = (9Z)-octadecenoate + CoA + H(+). It catalyses the reaction (9Z)-hexadecenoyl-CoA + H2O = (9Z)-hexadecenoate + CoA + H(+). The catalysed reaction is (9E)-octadecenoyl-CoA + H2O = (9E)-octadecenoate + CoA + H(+). The enzyme catalyses (9Z,12Z)-octadecadienoyl-CoA + H2O = (9Z,12Z)-octadecadienoate + CoA + H(+). Its pathway is lipid metabolism; fatty acid metabolism. Functionally, catalyzes the hydrolysis of acyl-CoAs into free fatty acids and coenzyme A (CoASH), regulating their respective intracellular levels. Displays higher activity toward long chain acyl CoAs (C14-C20). The enzyme is involved in enhancing the hepatic fatty acid oxidation in mitochondria. The polypeptide is Acyl-coenzyme A thioesterase 2, mitochondrial (Acot2) (Mus musculus (Mouse)).